The chain runs to 118 residues: MIATIVTSVSIIFVVLGALISAFAATGLIRLRDVYSRAHAAGKAATLGAMFLLFGAFLYFIGTEGYVNMQLIIGIIFVFITGPLSSHLIMKAAYNIKTPYTKDTKIDEIKEDMKHTKL.

Transmembrane regions (helical) follow at residues 9–29, 47–67, and 69–89; these read VSII…TGLI, LGAM…EGYV, and MQLI…SHLI.

The protein belongs to the CPA3 antiporters (TC 2.A.63) subunit G family. May form a heterooligomeric complex that consists of seven subunits: mnhA1, mnhB1, mnhC1, mnhD1, mnhE1, mnhF1 and mnhG1.

The protein resides in the cell membrane. Its function is as follows. Mnh complex is a Na(+)/H(+) antiporter involved in Na(+) excretion. The chain is Na(+)/H(+) antiporter subunit G1 (mnhG1) from Staphylococcus epidermidis (strain ATCC 35984 / DSM 28319 / BCRC 17069 / CCUG 31568 / BM 3577 / RP62A).